The primary structure comprises 319 residues: ATP-dependent 6-phosphofructokinase (319 aa).

ATP is bound at residue Gly11. Residue 21 to 25 participates in ADP binding; sequence RAVVR. ATP-binding positions include 72-73 and 102-105; these read RC and GDGS. Asp103 lines the Mg(2+) pocket. 125–127 contacts substrate; it reads TID. The Proton acceptor role is filled by Asp127. Residue Arg154 coordinates ADP. Substrate contacts are provided by residues Arg162 and 169–171; that span reads MGR. ADP contacts are provided by residues 185–187, Lys211, and 213–215; these read GAE and KMH. Substrate is bound by residues Glu222, Arg243, and 249–252; that span reads HIQR.

The protein belongs to the phosphofructokinase type A (PFKA) family. ATP-dependent PFK group I subfamily. Prokaryotic clade 'B1' sub-subfamily. Homotetramer. Mg(2+) serves as cofactor.

Its subcellular location is the cytoplasm. The catalysed reaction is beta-D-fructose 6-phosphate + ATP = beta-D-fructose 1,6-bisphosphate + ADP + H(+). The protein operates within carbohydrate degradation; glycolysis; D-glyceraldehyde 3-phosphate and glycerone phosphate from D-glucose: step 3/4. With respect to regulation, allosterically activated by ADP and other diphosphonucleosides, and allosterically inhibited by phosphoenolpyruvate. Its function is as follows. Catalyzes the phosphorylation of D-fructose 6-phosphate to fructose 1,6-bisphosphate by ATP, the first committing step of glycolysis. The protein is ATP-dependent 6-phosphofructokinase of Clostridium botulinum (strain 657 / Type Ba4).